Reading from the N-terminus, the 446-residue chain is Phosphoglucosamine mutase (446 aa).

Serine 99 serves as the catalytic Phosphoserine intermediate. The Mg(2+) site is built by serine 99, aspartate 242, aspartate 244, and aspartate 246. Serine 99 carries the post-translational modification Phosphoserine.

It belongs to the phosphohexose mutase family. It depends on Mg(2+) as a cofactor. Post-translationally, activated by phosphorylation.

The catalysed reaction is alpha-D-glucosamine 1-phosphate = D-glucosamine 6-phosphate. Functionally, catalyzes the conversion of glucosamine-6-phosphate to glucosamine-1-phosphate. The polypeptide is Phosphoglucosamine mutase (Campylobacter fetus subsp. fetus (strain 82-40)).